The sequence spans 99 residues: MANMFLMFYLSMIMFLFGCMVFVSNRKHLLSTLLSLEYMVLSLFIFLFFYLNFMNYETYFSMFFLTFCVCEGVLGLSILVSMIRTHGNDYFQSFSILQC.

3 consecutive transmembrane segments (helical) span residues 4–24, 29–49, and 63–83; these read MFLM…VFVS, LLST…FLFF, and FFLT…VSMI.

Belongs to the complex I subunit 4L family.

Its subcellular location is the mitochondrion membrane. The catalysed reaction is a ubiquinone + NADH + 5 H(+)(in) = a ubiquinol + NAD(+) + 4 H(+)(out). Core subunit of the mitochondrial membrane respiratory chain NADH dehydrogenase (Complex I) that is believed to belong to the minimal assembly required for catalysis. Complex I functions in the transfer of electrons from NADH to the respiratory chain. The immediate electron acceptor for the enzyme is believed to be ubiquinone. The chain is NADH-ubiquinone oxidoreductase chain 4L (mt:ND4L) from Anopheles gambiae (African malaria mosquito).